The following is a 229-amino-acid chain: Octanoyltransferase (229 aa).

The BPL/LPL catalytic domain occupies 45-220; the sequence is ATAVDELWVV…ELARQFCFVL (176 aa). Substrate is bound by residues 84–91, 151–153, and 164–166; these read RGGQVTYH, ALG, and GVA. The Acyl-thioester intermediate role is filled by Cys182.

Belongs to the LipB family.

It localises to the cytoplasm. The catalysed reaction is octanoyl-[ACP] + L-lysyl-[protein] = N(6)-octanoyl-L-lysyl-[protein] + holo-[ACP] + H(+). The protein operates within protein modification; protein lipoylation via endogenous pathway; protein N(6)-(lipoyl)lysine from octanoyl-[acyl-carrier-protein]: step 1/2. Its function is as follows. Catalyzes the transfer of endogenously produced octanoic acid from octanoyl-acyl-carrier-protein onto the lipoyl domains of lipoate-dependent enzymes. Lipoyl-ACP can also act as a substrate although octanoyl-ACP is likely to be the physiological substrate. The sequence is that of Octanoyltransferase from Xylella fastidiosa (strain 9a5c).